Here is a 118-residue protein sequence, read N- to C-terminus: Large ribosomal subunit protein uL18 (118 aa).

Belongs to the universal ribosomal protein uL18 family. As to quaternary structure, part of the 50S ribosomal subunit; part of the 5S rRNA/L5/L18/L25 subcomplex. Contacts the 5S and 23S rRNAs.

In terms of biological role, this is one of the proteins that bind and probably mediate the attachment of the 5S RNA into the large ribosomal subunit, where it forms part of the central protuberance. In Campylobacter jejuni subsp. doylei (strain ATCC BAA-1458 / RM4099 / 269.97), this protein is Large ribosomal subunit protein uL18.